Consider the following 124-residue polypeptide: Putative melanoma-associated antigen 5P (124 aa).

The segment covering 1-14 (MSLEQKSQHCKPEE) has biased composition (basic and acidic residues). 2 disordered regions span residues 1–69 (MSLE…QGAS) and 82–103 (QSIK…DPES). One can recognise an MAGE domain in the interval 3–124 (LEQKSQHCKP…DLIHFLLLKY (122 aa)). Composition is skewed to polar residues over residues 30-44 (AATT…SSSP) and 82-100 (QSIK…TSPD).

In terms of tissue distribution, expressed in many tumors of several types, such as melanoma, head and neck squamous cell carcinoma, lung carcinoma and breast carcinoma, but not in normal tissues except for testes.

Functionally, may negatively regulates apoptosis. The chain is Putative melanoma-associated antigen 5P from Homo sapiens (Human).